The primary structure comprises 288 residues: Bifunctional protein FolD (288 aa).

Residues Gly166 to Ser168 and Ile232 each bind NADP(+).

Belongs to the tetrahydrofolate dehydrogenase/cyclohydrolase family. In terms of assembly, homodimer.

It carries out the reaction (6R)-5,10-methylene-5,6,7,8-tetrahydrofolate + NADP(+) = (6R)-5,10-methenyltetrahydrofolate + NADPH. The enzyme catalyses (6R)-5,10-methenyltetrahydrofolate + H2O = (6R)-10-formyltetrahydrofolate + H(+). Its pathway is one-carbon metabolism; tetrahydrofolate interconversion. In terms of biological role, catalyzes the oxidation of 5,10-methylenetetrahydrofolate to 5,10-methenyltetrahydrofolate and then the hydrolysis of 5,10-methenyltetrahydrofolate to 10-formyltetrahydrofolate. The polypeptide is Bifunctional protein FolD (Shigella dysenteriae serotype 1 (strain Sd197)).